The chain runs to 378 residues: Glutamate 5-kinase (378 aa).

K21 contacts ATP. Residues S61, D148, and N160 each coordinate substrate. 180–181 (TD) contacts ATP. Positions 286 to 364 (RGTLVLDAGA…RRIEELLGYM (79 aa)) constitute a PUA domain.

The protein belongs to the glutamate 5-kinase family.

The protein localises to the cytoplasm. It carries out the reaction L-glutamate + ATP = L-glutamyl 5-phosphate + ADP. It participates in amino-acid biosynthesis; L-proline biosynthesis; L-glutamate 5-semialdehyde from L-glutamate: step 1/2. Catalyzes the transfer of a phosphate group to glutamate to form L-glutamate 5-phosphate. This Chromohalobacter salexigens (strain ATCC BAA-138 / DSM 3043 / CIP 106854 / NCIMB 13768 / 1H11) protein is Glutamate 5-kinase.